We begin with the raw amino-acid sequence, 525 residues long: Ankyrin repeat and SOCS box protein 3 (525 aa).

11 ANK repeats span residues 9-38, 42-71, 78-107, 111-140, 145-174, 178-207, 211-240, 246-275, 279-308, 315-346, and 348-373; these read DTCSTVGLAAREGNVKVLRKLLKKGRSIDV, RGWMPIHEASYHNSVECLRMLIRADSSENY, EGFCALHLAASQGHWKIIQILLEAGADPNA, EETTPLFLAVENGQIDVLRLLLRYGANVNG, CGWNALHQASFQGNAEIIKLLLKKGANKEC, FGITPLFVAAQYGKLESLSILISSGADVNC, DKATPLFIAAQEGHTECVELLLSSGADPDL, NWQLPIHAAAQMGHTKILDLLIPLTNRVCD, NKVSPVYSAVLGGHEECLEMLLQSGYSPDA, GFSSPLCMAFQKDCDFFGIVNILLKYGAQLNE, and HLAYCLKYERFSVFRYFLKKCCPSTP. An SOCS box domain is found at 441-505; sequence MLSARASNSS…HDYLLYAEVL (65 aa).

It belongs to the ankyrin SOCS box (ASB) family. In terms of assembly, interacts with ELOB and TNFRSF1B.

It functions in the pathway protein modification; protein ubiquitination. Probable substrate-recognition component of a SCF-like ECS (Elongin-Cullin-SOCS-box protein) E3 ubiquitin-protein ligase complex which mediates the ubiquitination and subsequent proteasomal degradation of target proteins. Recognizes TNFRSF1B. In Bos taurus (Bovine), this protein is Ankyrin repeat and SOCS box protein 3 (ASB3).